We begin with the raw amino-acid sequence, 312 residues long: tRNA pseudouridine synthase B (312 aa).

Aspartate 37 functions as the Nucleophile in the catalytic mechanism.

The protein belongs to the pseudouridine synthase TruB family. Type 1 subfamily.

It catalyses the reaction uridine(55) in tRNA = pseudouridine(55) in tRNA. Its function is as follows. Responsible for synthesis of pseudouridine from uracil-55 in the psi GC loop of transfer RNAs. In Deinococcus geothermalis (strain DSM 11300 / CIP 105573 / AG-3a), this protein is tRNA pseudouridine synthase B.